Consider the following 157-residue polypeptide: SUMO-conjugating enzyme UBC9 (157 aa).

S2 carries the post-translational modification N-acetylserine. The UBC core domain maps to 4 to 157; sequence LCLQRLQEER…VLLQAKQYSK (154 aa). Catalysis depends on C93, which acts as the Glycyl thioester intermediate.

The protein belongs to the ubiquitin-conjugating enzyme family. Interacts with SIZ1.

The protein localises to the nucleus. It functions in the pathway protein modification; protein sumoylation. In terms of biological role, E2 ubiquitin-like--protein ligase mediating SUMO/Smt3 attachment to septins and PCNA. Seems to be involved in degradation of S- (CLB5) and M-phase cyclins (CLB2). This Saccharomyces cerevisiae (strain ATCC 204508 / S288c) (Baker's yeast) protein is SUMO-conjugating enzyme UBC9 (UBC9).